Reading from the N-terminus, the 2465-residue chain is Serine/threonine-protein kinase TOR (2465 aa).

11 HEAT repeats span residues 184–221 (VHVP…VIEK), 271–308 (SRYR…FLRD), 348–389 (AELV…AMGP), 549–587 (RLVE…FDDF), 588–625 (LAQA…KNPA), 717–755 (QYLP…STGY), 761–799 (NEYP…LDPH), 888–926 (PYLP…IVRQ), 981–1018 (MYIL…VFGG), 1022–1059 (EHMH…TVQV), and 1061–1098 (THVS…ALGE). The disordered stretch occupies residues 1158 to 1191 (DFGGVPSEEADETQRQPRSHQVNDVRLRSAGEAS). The region spanning 1297-1877 (LLGALAEKCR…MYPLLVACKS (581 aa)) is the FAT domain. The 319-residue stretch at 2051–2369 (FVPQLIVITS…PPRGAREREL (319 aa)) folds into the PI3K/PI4K catalytic domain. The G-loop stretch occupies residues 2057 to 2063 (VITSKQR). The interval 2230-2238 (GLGDRHPSN) is catalytic loop. The segment at 2250–2275 (HIDFGDCFEASMNREKFPEKVPFRLT) is activation loop. A disordered region spans residues 2401–2431 (RDFSSGSSLSGAGSSTQHGNEHLASGDTREV). A compositionally biased stretch (low complexity) spans 2404 to 2415 (SSGSSLSGAGSS). In terms of domain architecture, FATC spans 2433–2465 (PGLSVKVQVQRLILQATSHENLCQNYVGWCPFW).

It belongs to the PI3/PI4-kinase family. In terms of assembly, the target of rapamycin complex 1 (TORC1) is composed of at least RAPTOR, LST8 and TOR.

It carries out the reaction L-seryl-[protein] + ATP = O-phospho-L-seryl-[protein] + ADP + H(+). It catalyses the reaction L-threonyl-[protein] + ATP = O-phospho-L-threonyl-[protein] + ADP + H(+). With respect to regulation, insensitive to inhibition by rapamycin. Functionally, component of TORC1 complex, which is an essential cell growth regulator that controls plant development. Acts through the phosphorylation of downstream effectors that are recruited by the binding partner RAPTOR. Acts by activating transcription, protein synthesis and ribosome biogenesis, and inhibiting mRNA degradation and autophagy. This Oryza sativa subsp. japonica (Rice) protein is Serine/threonine-protein kinase TOR.